We begin with the raw amino-acid sequence, 212 residues long: Deoxyribose-phosphate aldolase (212 aa).

Aspartate 89 functions as the Proton donor/acceptor in the catalytic mechanism. Lysine 151 acts as the Schiff-base intermediate with acetaldehyde in catalysis. The active-site Proton donor/acceptor is the lysine 180.

Belongs to the DeoC/FbaB aldolase family. DeoC type 1 subfamily.

Its subcellular location is the cytoplasm. The catalysed reaction is 2-deoxy-D-ribose 5-phosphate = D-glyceraldehyde 3-phosphate + acetaldehyde. It participates in carbohydrate degradation; 2-deoxy-D-ribose 1-phosphate degradation; D-glyceraldehyde 3-phosphate and acetaldehyde from 2-deoxy-alpha-D-ribose 1-phosphate: step 2/2. Functionally, catalyzes a reversible aldol reaction between acetaldehyde and D-glyceraldehyde 3-phosphate to generate 2-deoxy-D-ribose 5-phosphate. This Clostridium botulinum (strain 657 / Type Ba4) protein is Deoxyribose-phosphate aldolase.